Consider the following 3095-residue polypeptide: Centrosome-associated protein 350 (3095 aa).

Disordered stretches follow at residues 1 to 24 (MRSS…ETIQ) and 63 to 105 (TKKS…RSPL). Residues 14 to 24 (PRNSQSKETIQ) show a composition bias toward polar residues. Residues serine 84 and serine 140 each carry the phosphoserine modification. Disordered regions lie at residues 219–239 (DEMP…LNNM), 251–272 (SDSS…KRQQ), and 430–493 (KILG…RAWS). Residues 228-238 (SENNSKPSLNN) are compositionally biased toward polar residues. Positions 251–265 (SDSSPSSSACNSQRS) are enriched in low complexity. Basic and acidic residues-rich tracts occupy residues 438 to 457 (MEQK…ERVA) and 464 to 476 (GRAE…DVSH). Residue serine 468 is modified to Phosphoserine. Over residues 481-491 (RSSARSRSSRA) the composition is skewed to low complexity. Serine 503 carries the phosphoserine modification. Disordered stretches follow at residues 538–623 (QAVR…QKNK) and 671–718 (ARQH…PPQP). 2 stretches are compositionally biased toward basic and acidic residues: residues 587–623 (YDTD…QKNK) and 690–699 (ESDKENKIQE). A coiled-coil region spans residues 596–641 (IVRQQEERRRRQHEEKKAQKEATEQKNKRLQELYRRQREAFSKAKT). Position 691 is a phosphoserine (serine 691). Residues 701-714 (PPSASSSSDLSLSE) show a composition bias toward low complexity. Residues serine 874 and serine 935 each carry the phosphoserine modification. Residues 977–996 (SVSEGPLLSEGSLSEEEERR) form a disordered region. Residues 979-988 (SEGPLLSEGS) show a composition bias toward low complexity. Residue serine 1057 is modified to Phosphoserine. 2 disordered regions span residues 1099 to 1128 (YEDD…GSSL) and 1151 to 1265 (QHSS…SQKL). Residues 1119 to 1128 (LESQVDGSSL) show a composition bias toward polar residues. Residues 1153-1168 (SSGARSAGSTRSSSAS) show a composition bias toward low complexity. Residues 1194 to 1206 (DEEKVQSDSERGS) are compositionally biased toward basic and acidic residues. Serine 1200 is modified (phosphoserine). Positions 1251 to 1265 (QKTPTSPLSPSSQKL) are enriched in low complexity. At threonine 1253 the chain carries Phosphothreonine. Serine 1256 and serine 1259 each carry phosphoserine. The stretch at 1363-1402 (IKAQQQRHERDLALLKLKAEQEALECQRQLEETRNKTAQV) forms a coiled coil. 4 disordered regions span residues 1490–1668 (AETD…GQDS), 1720–1739 (LRDK…QRGL), 1787–1864 (KLKS…QRRQ), and 1893–2017 (AWDK…PVKS). A compositionally biased stretch (basic and acidic residues) spans 1503-1513 (QSKEGAVDSKR). Composition is skewed to low complexity over residues 1517-1526 (SPSRDSYSES) and 1536-1545 (SSGSSRQDSP). Residues 1551–1564 (KENEKPFHGEKMES) show a composition bias toward basic and acidic residues. The residue at position 1606 (serine 1606) is a Phosphoserine. Residues 1624–1640 (ESHRRFNMEKKRGHHDD) show a composition bias toward basic and acidic residues. A phosphoserine mark is found at serine 1641 and serine 1646. The stretch at 1700 to 1793 (KALKEKTKAE…LQEKLKSAGE (94 aa)) forms a coiled coil. The segment covering 1787–1796 (KLKSAGEKKL) has biased composition (basic and acidic residues). Serine 1812 carries the post-translational modification Phosphoserine. A compositionally biased stretch (low complexity) spans 1819-1835 (ETRSPSPISISSSETSS). 2 stretches are compositionally biased toward basic and acidic residues: residues 1845-1864 (SRMD…QRRQ) and 1894-1915 (WDKE…RTEQ). Positions 1850–1893 (KFLTKREQKLMQRRQHAEELLEWKRRLDAEEAEIQQMEKQALAA) form a coiled coil. Serine 1930 is subject to Phosphoserine. Over residues 1980 to 1994 (STSPSKHSPPKSCLS) the composition is skewed to low complexity. Basic and acidic residues predominate over residues 1999-2011 (ESSKASHRTEGHC). Residues 2043-2092 (IEGRIRALKDELRKRKSVVEQLKREQRKRQKERLKAQEASLLRQLETYDE) adopt a coiled-coil conformation. Position 2108 is a phosphoserine (serine 2108). Disordered stretches follow at residues 2116–2155 (KTLS…GSLA), 2191–2265 (IEHL…VEDA), 2286–2427 (LSSK…EISE), and 2440–2471 (VHSE…GGTE). The span at 2133–2151 (HRSETAKTWKSVTESERSR) shows a compositional bias: basic and acidic residues. Serine 2198 bears the Phosphoserine mark. Basic and acidic residues-rich tracts occupy residues 2202–2214 (SSRK…RDSL) and 2227–2259 (NAPD…KLES). Positions 2286-2300 (LSSKELPSDSANVQQ) are enriched in polar residues. Residues 2301-2331 (DLDKPATETSHEKEEALKEDQSNHSTDDRSP) are compositionally biased toward basic and acidic residues. The segment covering 2349–2362 (DSTCSGQLSVPKES) has biased composition (polar residues). 2 stretches are compositionally biased toward basic and acidic residues: residues 2377-2387 (ISADEISKDDS) and 2395-2407 (LRKD…DRSQ). The segment covering 2409–2420 (TRSSRSRATGSG) has biased composition (low complexity). 2 positions are modified to phosphoserine: serine 2421 and serine 2450. The segment covering 2455 to 2465 (MKSKERSDVGH) has biased composition (basic and acidic residues). Positions 2504–2546 (GETDFAKGFWAGVELDKPEGNNNGTYDGIVYFVCKDKHGIFAP) constitute a CAP-Gly domain. At threonine 2671 the chain carries Phosphothreonine. Positions 2700 to 2731 (LLDLLTREKNQLEAQLKSSISEEKKSKQQLET) form a coiled coil. Positions 2767 to 2793 (QEFLDQKKVPPQDLPQNTEEQSPSVPS) are disordered. Residues 2780 to 2791 (LPQNTEEQSPSV) show a composition bias toward polar residues. 2 positions are modified to phosphoserine: serine 2809 and serine 2818.

As to quaternary structure, part of a ternary complex that contains CEP350, CEP43 and MAPRE1. Interacts (via C-terminus) directly with CEP43 (via N-terminus). Interacts with NR1H3, PPARA, PPARD and PPARG. Interacts directly with microtubules. Interacts with the fusion protein CEP43-FGFR1, and by doing so recruits and activates PI3K and PLC-gamma. Interacts with CYLD. Interacts with CFAP157. Interacts with CEP19 (via C-terminus). Interacts with CEP78; promoting CEP78 localization to centrosome and centriole. Phosphorylated during mitosis.

It is found in the cytoplasm. Its subcellular location is the cytoskeleton. It localises to the microtubule organizing center. The protein localises to the centrosome. The protein resides in the spindle. It is found in the nucleus. Its subcellular location is the centriole. It localises to the cilium basal body. Its function is as follows. Plays an essential role in centriole growth by stabilizing a procentriolar seed composed of at least, SASS6 and CPAP. Required for anchoring microtubules to the centrosomes and for the integrity of the microtubule network. Recruits PPARA to discrete subcellular compartments and thereby modulates PPARA activity. Required for ciliation. This is Centrosome-associated protein 350 from Mus musculus (Mouse).